Consider the following 499-residue polypeptide: MAQDTALHLPLGLEPAGWALALLTSSIIYLFLSPKSKSPRFPVVNKYWWDFFQAKAKRDFEAGAEDLIKLGLSKARTKPRREYPRLVLSDQLADAVGMDNRFDQDKGIAPVNLVTLKGFESMYAGALHDSVPRPATSATSKRLVHLTRPFSEETTDFLQREWTESPDWHDIEVYPVISRLTAQVLSRAFVGPRLCRDTRWLEIATTYISNRLTAVVAVQKWGAVLHPIVHWFLPSCRRLRAQNKRARELLQPELDRIKESPLEDETFTSLAWIHGYGQGYIYDPGLAQLRLSAVANHTTSDMMTKTLIRICENPELIQPLREEAIEAVRGGGLRVAALQKMFLMESVMQESQRLEPFILLSMFRYATETVTLPEGTTIPKGTLLAIANPSRLDPAIYPDPHKFDGYRFVRMREDPRHAHLAPFTKTNSTNLNFGHGKQACPGRFIAVNQIKIALCHMLLKYDIELVEECPSQLVRSGLVTVRNPGAKIRVRRRQEEVCL.

A helical transmembrane segment spans residues 11-31 (LGLEPAGWALALLTSSIIYLF). N-linked (GlcNAc...) asparagine glycans are attached at residues Asn-296 and Asn-427. Cys-440 provides a ligand contact to heme.

The protein belongs to the cytochrome P450 family. Heme serves as cofactor.

The protein resides in the membrane. It functions in the pathway alkaloid biosynthesis. Functionally, cytochrome P450 monooxygenase; part of the gene cluster that mediates the biosynthesis of notoamide, a fungal indole alkaloid that belongs to a family of natural products containing a characteristic bicyclo[2.2.2]diazaoctane core. The first step of notoamide biosynthesis involves coupling of L-proline and L-tryptophan by the bimodular NRPS notE', to produce cyclo-L-tryptophan-L-proline called brevianamide F. The reverse prenyltransferase notF' then acts as a deoxybrevianamide E synthase and converts brevianamide F to deoxybrevianamide E via reverse prenylation at C-2 of the indole ring leading to the bicyclo[2.2.2]diazaoctane core. Deoxybrevianamide E is further hydroxylated at C-6 of the indole ring, likely catalyzed by the cytochrome P450 monooxygenase notG', to yield 6-hydroxy-deoxybrevianamide E. 6-hydroxy-deoxybrevianamide E is a specific substrate of the prenyltransferase notC' for normal prenylation at C-7 to produce 6-hydroxy-7-prenyl-deoxybrevianamide, also called notoamide S. As the proposed pivotal branching point in notoamide biosynthesis, notoamide S can be diverted to notoamide E through an oxidative pyran ring closure putatively catalyzed by either notH' cytochrome P450 monooxygenase or the notD' FAD-linked oxidoreductase. This step would be followed by an indole 2,3-epoxidation-initiated pinacol-like rearrangement catalyzed by the notB' FAD-dependent monooxygenase leading to the formation of notoamide C and notoamide D. On the other hand notoamide S is converted to notoamide T by notH' (or notD'), a bifunctional oxidase that also functions as the intramolecular Diels-Alderase responsible for generation of (-)-notoamide T. To generate antipodal (+)-notoaminide T, notH (or notD) in Aspergillus strain MF297-2 is expected to catalyze a Diels-Alder reaction leading to the opposite stereochemistry. The remaining oxidoreductase notD' (or notH') likely catalyzes the oxidative pyran ring formation to yield (-)-stephacidin A. The FAD-dependent monooxygenase notI' is highly similar to notB' and is predicted to catalyze a similar conversion from (-)-stephacidin A to (+)-notoamide B via the 2,3-epoxidation of (-)-stephacidin A followed by a pinacol-type rearrangement. Finally, it remains unclear which enzyme could be responsible for the final hydroxylation steps leading to notoamide A and sclerotiamide. The sequence is that of Cytochrome P450 monooxygenase notH' from Aspergillus versicolor.